We begin with the raw amino-acid sequence, 134 residues long: Probable glycine cleavage system H protein (134 aa).

The Lipoyl-binding domain occupies Thr29–Lys110. Residue Lys70 is modified to N6-lipoyllysine.

This sequence belongs to the GcvH family. The glycine cleavage system is composed of four proteins: P, T, L and H. The cofactor is (R)-lipoate.

In terms of biological role, the glycine cleavage system catalyzes the degradation of glycine. The H protein shuttles the methylamine group of glycine from the P protein to the T protein. This Thermococcus kodakarensis (strain ATCC BAA-918 / JCM 12380 / KOD1) (Pyrococcus kodakaraensis (strain KOD1)) protein is Probable glycine cleavage system H protein.